The sequence spans 458 residues: UPF0210 protein Mevan_0738 (458 aa).

The protein belongs to the UPF0210 family.

The chain is UPF0210 protein Mevan_0738 from Methanococcus vannielii (strain ATCC 35089 / DSM 1224 / JCM 13029 / OCM 148 / SB).